Consider the following 582-residue polypeptide: ATP-dependent lipid A-core flippase (582 aa).

The next 5 membrane-spanning stretches (helical) occupy residues 16–36 (LWPT…ALIL), 63–83 (VLVW…ITSY), 153–173 (IIGL…ILIV), 253–273 (PIIQ…ASFP), and 275–295 (VMDN…IALM). The region spanning 28–310 (IVAGVALILN…LTNVNAQFQR (283 aa)) is the ABC transmembrane type-1 domain. Residues 342–578 (VEFRNVTFTY…RGVYAQLHKM (237 aa)) form the ABC transporter domain. 376–383 (GRSGSGKS) is an ATP binding site.

It belongs to the ABC transporter superfamily. Lipid exporter (TC 3.A.1.106) family. As to quaternary structure, homodimer.

It localises to the cell inner membrane. It carries out the reaction ATP + H2O + lipid A-core oligosaccharideSide 1 = ADP + phosphate + lipid A-core oligosaccharideSide 2.. Functionally, involved in lipopolysaccharide (LPS) biosynthesis. Translocates lipid A-core from the inner to the outer leaflet of the inner membrane. Transmembrane domains (TMD) form a pore in the inner membrane and the ATP-binding domain (NBD) is responsible for energy generation. The protein is ATP-dependent lipid A-core flippase of Shigella flexneri.